Reading from the N-terminus, the 400-residue chain is Subtilisin-like protease 11 (400 aa).

The signal sequence occupies residues 1-19; it reads MGLFKVIFTAVAALSAVDA. A propeptide spanning residues 20 to 117 is cleaved from the precursor; sequence AELLSSAKSK…VEHDRHVYIS (98 aa). Residues 35–116 enclose the Inhibitor I9 domain; the sequence is SYLVVMKDSV…FVEHDRHVYI (82 aa). One can recognise a Peptidase S8 domain in the interval 127–400; that stretch reads SWGLGRVSHR…NKLLYNRSGK (274 aa). N-linked (GlcNAc...) asparagine glycosylation is present at Asn-138. The active-site Charge relay system is the Asp-159. Asn-181 is a glycosylation site (N-linked (GlcNAc...) asparagine). Catalysis depends on His-191, which acts as the Charge relay system. N-linked (GlcNAc...) asparagine glycosylation is found at Asn-252 and Asn-337. Catalysis depends on Ser-346, which acts as the Charge relay system. N-linked (GlcNAc...) asparagine glycans are attached at residues Asn-388 and Asn-396.

This sequence belongs to the peptidase S8 family.

The protein resides in the secreted. Functionally, secreted subtilisin-like serine protease with keratinolytic activity that contributes to pathogenicity. This chain is Subtilisin-like protease 11 (SUB11), found in Trichophyton verrucosum (strain HKI 0517).